Here is a 627-residue protein sequence, read N- to C-terminus: (-)-beta-pinene synthase 1, chloroplastic (627 aa).

The N-terminal 50 residues, 1–50, are a transit peptide targeting the chloroplast; sequence MDLISVLPSTSKSCVCLHKPLSSSTHKLKPFCRTIRILGMPRPRKSVLMA. Residues aspartate 378, aspartate 382, and aspartate 530 each coordinate Mg(2+). Positions 378–382 match the DDXXD motif motif; that stretch reads DDMYD.

The protein belongs to the terpene synthase family. Tpsd subfamily. Mg(2+) is required as a cofactor. Mn(2+) serves as cofactor.

Its subcellular location is the plastid. It is found in the chloroplast. It catalyses the reaction (2E)-geranyl diphosphate = (1S,5S)-beta-pinene + diphosphate. The enzyme catalyses (2E)-geranyl diphosphate = (1S,5S)-alpha-pinene + diphosphate. It functions in the pathway terpene metabolism; oleoresin biosynthesis. The protein operates within secondary metabolite biosynthesis; terpenoid biosynthesis. Monoterpene synthase (TPS) involved in the biosynthesis of monoterpene natural products included in conifer oleoresin secretions and volatile emissions; these compounds contribute to biotic and abiotic stress defense against herbivores and pathogens. Catalyzes the conversion of (2E)-geranyl diphosphate (GPP) to (-)-beta-pinene and, to a lower extent, to (-)-alpha-pinene. The chain is (-)-beta-pinene synthase 1, chloroplastic from Pinus contorta (Shore pine).